The following is a 1203-amino-acid chain: ATP-dependent helicase/nuclease subunit A (1203 aa).

The UvrD-like helicase ATP-binding domain occupies 4-472 (VKLTPEQNEA…IRLKENFRSR (469 aa)). ATP is bound at residue 25–32 (ASAGSGKT). The 283-residue stretch at 503–785 (VQGNISDYPV…RVMTFHKSKG (283 aa)) folds into the UvrD-like helicase C-terminal domain.

This sequence belongs to the helicase family. AddA subfamily. Heterodimer of AddA and AddB/RexB. The cofactor is Mg(2+).

It catalyses the reaction Couples ATP hydrolysis with the unwinding of duplex DNA by translocating in the 3'-5' direction.. The enzyme catalyses ATP + H2O = ADP + phosphate + H(+). Functionally, the heterodimer acts as both an ATP-dependent DNA helicase and an ATP-dependent, dual-direction single-stranded exonuclease. Recognizes the chi site generating a DNA molecule suitable for the initiation of homologous recombination. The AddA nuclease domain is required for chi fragment generation; this subunit has the helicase and 3' -&gt; 5' nuclease activities. The sequence is that of ATP-dependent helicase/nuclease subunit A from Lactococcus lactis subsp. cremoris (strain SK11).